A 346-amino-acid chain; its full sequence is Holliday junction branch migration complex subunit RuvB (346 aa).

The tract at residues 1-182 (MSEPARLISP…FGIPVRLSFY (182 aa)) is large ATPase domain (RuvB-L). ATP-binding positions include leucine 21, arginine 22, glycine 63, lysine 66, threonine 67, threonine 68, 129–131 (EDF), arginine 172, tyrosine 182, and arginine 219. Residue threonine 67 participates in Mg(2+) binding. A small ATPAse domain (RuvB-S) region spans residues 183–253 (TVEELELIVR…IADEALTRLL (71 aa)). A head domain (RuvB-H) region spans residues 256–346 (NVGFDQLDKR…AQFRLFQEDD (91 aa)). Residues arginine 292, arginine 311, and arginine 316 each contribute to the DNA site.

The protein belongs to the RuvB family. As to quaternary structure, homohexamer. Forms an RuvA(8)-RuvB(12)-Holliday junction (HJ) complex. HJ DNA is sandwiched between 2 RuvA tetramers; dsDNA enters through RuvA and exits via RuvB. An RuvB hexamer assembles on each DNA strand where it exits the tetramer. Each RuvB hexamer is contacted by two RuvA subunits (via domain III) on 2 adjacent RuvB subunits; this complex drives branch migration. In the full resolvosome a probable DNA-RuvA(4)-RuvB(12)-RuvC(2) complex forms which resolves the HJ.

The protein resides in the cytoplasm. It catalyses the reaction ATP + H2O = ADP + phosphate + H(+). Its function is as follows. The RuvA-RuvB-RuvC complex processes Holliday junction (HJ) DNA during genetic recombination and DNA repair, while the RuvA-RuvB complex plays an important role in the rescue of blocked DNA replication forks via replication fork reversal (RFR). RuvA specifically binds to HJ cruciform DNA, conferring on it an open structure. The RuvB hexamer acts as an ATP-dependent pump, pulling dsDNA into and through the RuvAB complex. RuvB forms 2 homohexamers on either side of HJ DNA bound by 1 or 2 RuvA tetramers; 4 subunits per hexamer contact DNA at a time. Coordinated motions by a converter formed by DNA-disengaged RuvB subunits stimulates ATP hydrolysis and nucleotide exchange. Immobilization of the converter enables RuvB to convert the ATP-contained energy into a lever motion, pulling 2 nucleotides of DNA out of the RuvA tetramer per ATP hydrolyzed, thus driving DNA branch migration. The RuvB motors rotate together with the DNA substrate, which together with the progressing nucleotide cycle form the mechanistic basis for DNA recombination by continuous HJ branch migration. Branch migration allows RuvC to scan DNA until it finds its consensus sequence, where it cleaves and resolves cruciform DNA. The sequence is that of Holliday junction branch migration complex subunit RuvB from Rhizobium etli (strain CIAT 652).